Here is a 447-residue protein sequence, read N- to C-terminus: Hydroxymethylglutaryl-CoA synthase (447 aa).

Catalysis depends on glutamate 86, which acts as the Proton donor/acceptor. Residue cysteine 118 is the Acyl-thioester intermediate of the active site. The (3S)-3-hydroxy-3-methylglutaryl-CoA site is built by cysteine 118, asparagine 156, threonine 160, serine 210, histidine 250, lysine 259, asparagine 327, and serine 361. The active-site Proton donor/acceptor is histidine 250. Threonine 398 carries the phosphothreonine modification.

It belongs to the thiolase-like superfamily. HMG-CoA synthase family.

It catalyses the reaction acetoacetyl-CoA + acetyl-CoA + H2O = (3S)-3-hydroxy-3-methylglutaryl-CoA + CoA + H(+). It functions in the pathway metabolic intermediate biosynthesis; (R)-mevalonate biosynthesis; (R)-mevalonate from acetyl-CoA: step 2/3. In terms of biological role, hydroxymethylglutaryl-CoA synthase; part of the first module of ergosterol biosynthesis pathway that includes the early steps of the pathway, conserved across all eukaryotes, and which results in the formation of mevalonate from acetyl-coenzyme A (acetyl-CoA). Hcs1 condenses acetyl-CoA with acetoacetyl-CoA to form hydroxymethylglutaryl-CoA (HMG-CoA). The first module starts with the action of the cytosolic acetyl-CoA acetyltransferase eg10 that catalyzes the formation of acetoacetyl-CoA. The hydroxymethylglutaryl-CoA synthases erg13 then condenses acetyl-CoA with acetoacetyl-CoA to form HMG-CoA. The rate-limiting step of the early module is the reduction to mevalonate by the 3-hydroxy-3-methylglutaryl-coenzyme A (HMG-CoA) reductases hcs1. This is Hydroxymethylglutaryl-CoA synthase from Schizosaccharomyces pombe (strain 972 / ATCC 24843) (Fission yeast).